The primary structure comprises 253 residues: Uroplakin-3b-like protein 1 (253 aa).

The N-terminal stretch at Met1–Ser26 is a signal peptide. Residues Leu27 to Val194 lie on the Extracellular side of the membrane. Asn78 and Asn130 each carry an N-linked (GlcNAc...) asparagine glycan. The chain crosses the membrane as a helical span at residues Ile195 to Ile215. The Cytoplasmic portion of the chain corresponds to Phe216 to Ser253.

Belongs to the uroplakin-3 family.

Its subcellular location is the membrane. The protein is Uroplakin-3b-like protein 1 of Bos taurus (Bovine).